The chain runs to 261 residues: Guanine nucleotide exchange factor BopE (261 aa).

It belongs to the GEF (guanine exchange factor) SopE family. In terms of assembly, monomer. Interacts with human CDC42.

The protein resides in the secreted. Its function is as follows. Activator for both CDC42 and RAC1 by directly interacting with these Rho GTPases and acting as a guanine nucleotide exchange factor (GEF). This activation results in actin cytoskeleton rearrangements and stimulates membrane ruffling, thus promoting bacterial entry into non-phagocytic cells. The sequence is that of Guanine nucleotide exchange factor BopE (bopE) from Burkholderia pseudomallei (strain 1710b).